Reading from the N-terminus, the 661-residue chain is Ubiquitin carboxyl-terminal hydrolase 51 (661 aa).

The segment at 1-144 is disordered; it reads MRGTQGAQEM…SENSLLEVGS (144 aa). Residues 21–30 show a composition bias toward polar residues; it reads TSENLTSRGS. Over residues 53–71 the composition is skewed to basic residues; that stretch reads PRRKPRPRPQPRSRSRGGR. The segment covering 75 to 96 has biased composition (pro residues); it reads APPPPPAKPPPPPPAPPPPPLP. The UBP-type zinc finger occupies 149–267; the sequence is TGCCHVESFK…KETKEKILGL (119 aa). The Zn(2+) site is built by cysteine 151, histidine 153, cysteine 192, cysteine 195, cysteine 205, cysteine 208, cysteine 213, histidine 218, histidine 222, histidine 228, cysteine 241, and cysteine 244. The USP domain maps to 320–656; the sequence is RGLINLGNTC…EGYLLFYHRQ (337 aa). Cysteine 329 functions as the Nucleophile in the catalytic mechanism. The active-site Proton acceptor is the histidine 615.

Belongs to the peptidase C19 family. As to quaternary structure, interacts with H2A.

The protein resides in the chromosome. It catalyses the reaction Thiol-dependent hydrolysis of ester, thioester, amide, peptide and isopeptide bonds formed by the C-terminal Gly of ubiquitin (a 76-residue protein attached to proteins as an intracellular targeting signal).. Its function is as follows. Specifically deubiquitinates 'Lys-14' (H2AK13Ub) and 'Lys-16'(H2AK15Ub) of histone H2A regulating the DNA damage response at double-strand breaks (DSBs). USP51 is recruited to chromatin after DNA damage and regulates the dynamic assembly/disassembly of TP53BP1 and BRCA1. Functions in DNA double-strand break repair also by mediating the deubiquitination and subsequent stabilization of DGCR8, leading to the recruitment of DGCR8 binding partners to double strand breaks such as RNF168 or MDC1. In addition, promotes the deubiquitination and stabilization of the transcriptional repressor ZEB1. This chain is Ubiquitin carboxyl-terminal hydrolase 51, found in Mus musculus (Mouse).